A 969-amino-acid polypeptide reads, in one-letter code: Defective in germ line development protein 3 (969 aa).

Positions 34-81 (MAENAASARKLFVSSALKDIIVNPENFYHDFQQSAQMAEDANQRRQVS) are gld-2-binding. KH domains are found at residues 34 to 109 (MAEN…MIEI), 113 to 187 (RVTL…MRRN), 189 to 259 (HFTV…NEIL), 270 to 342 (FTLH…IMDL), and 344 to 419 (PISM…YQKV). Positions 57–471 (PENFYHDFQQ…GSNGRRHRSS (415 aa)) are gls-1-binding. Disordered regions lie at residues 459–508 (LSDG…SFSE) and 602–711 (EQHR…GDIH). The segment covering 487–508 (KQFSESSGGPSRSHTRVSSFSE) has biased composition (polar residues). The span at 631–644 (PSSSTGSYYPSTTP) shows a compositional bias: low complexity. Residues 647-659 (RVYEQVREDDLRS) show a composition bias toward basic and acidic residues. Polar residues predominate over residues 664–676 (RRTSVNGDDQNVE). Basic and acidic residues-rich tracts occupy residues 677–687 (SMHDQGYERQY) and 694–711 (LQKD…GDIH). The interval 769-969 (LYMHESPHND…DLSLDETSTY (201 aa)) is gls-1-binding. A fbf-1-binding region spans residues 860 to 949 (NGVTKTILEP…VLNEKEKEIA (90 aa)). Positions 950-969 (DKSIESTVTQDLSLDETSTY) are disordered. The span at 954-969 (ESTVTQDLSLDETSTY) shows a compositional bias: polar residues.

As to quaternary structure, interacts (via its KH1 domain) with gld-2. Isoform A but not isoform B interacts specifically with fbf-1 and fbf-2 in an RNA-independent manner. Isoform A interacts with gls-1 isoform C. Expressed in the germline (at protein level). In adult hermaphrodites, first detected in the transition zone (TZ), weakly expressed in the early mitotic region and in pachytene germ cells, and becomes more abundantly expressed as germ cells enter diakinesis (at protein level). Expressed in primary spermatocytes, but not in secondary spermatocytes or adult sperm (at protein level).

The protein resides in the cytoplasm. It localises to the cytoplasmic granule. It is found in the perinuclear region. Required maternally for germline survival and embryogenesis. Forms a complex with gls-1 which promotes the oogenic cell fate by freeing the translational repressor fbf to repress sperm promoting factors. Promotes maturation of primary spermatocytes to mature sperm. Required during hermaphrodite development to promote sperm fate, which is critical for determining the normal number of sperm. Promotion of sperm fate is at the expense of oogenesis, possibly through the negative regulation of fbf. Required during male development for the continued production of sperm and inhibition of oogenesis. Together with gld-2, promotes the transition from mitosis to meiosis. Required for polyadenylation of neg-1 mRNA during embryogenesis. The protein is Defective in germ line development protein 3 of Caenorhabditis elegans.